Consider the following 66-residue polypeptide: Large ribosomal subunit protein bL33c (66 aa).

This sequence belongs to the bacterial ribosomal protein bL33 family.

It is found in the plastid. It localises to the chloroplast. The protein is Large ribosomal subunit protein bL33c of Angiopteris evecta (Mule's foot fern).